The chain runs to 135 residues: UPF0299 membrane protein YE2790 (135 aa).

4 helical membrane passes run 4 to 24 (VTSLGWQYLRAFVIIYLCLWA), 30 to 50 (LLLPISIPGSILGMLILFALL), 63 to 83 (GCHLLIRYMALLFVPIGVGVM), and 93 to 113 (FGPIVVSCFVSTLVVMLVVGY).

It belongs to the UPF0299 family.

It is found in the cell inner membrane. The chain is UPF0299 membrane protein YE2790 from Yersinia enterocolitica serotype O:8 / biotype 1B (strain NCTC 13174 / 8081).